The following is a 55-amino-acid chain: uncharacterized protein (55 aa).

This is an uncharacterized protein from Dictyostelium discoideum (Social amoeba).